A 237-amino-acid chain; its full sequence is D-aminoacyl-tRNA deacylase (237 aa).

Belongs to the DtdA deacylase family. In terms of assembly, monomer. The cofactor is Zn(2+).

The enzyme catalyses a D-aminoacyl-tRNA + H2O = a tRNA + a D-alpha-amino acid + H(+). It carries out the reaction glycyl-tRNA(Ala) + H2O = tRNA(Ala) + glycine + H(+). D-aminoacyl-tRNA deacylase with broad substrate specificity. By recycling D-aminoacyl-tRNA to D-amino acids and free tRNA molecules, this enzyme counteracts the toxicity associated with the formation of D-aminoacyl-tRNA entities in vivo. The protein is D-aminoacyl-tRNA deacylase of Sulfurisphaera tokodaii (strain DSM 16993 / JCM 10545 / NBRC 100140 / 7) (Sulfolobus tokodaii).